We begin with the raw amino-acid sequence, 388 residues long: S-adenosylmethionine synthase (388 aa).

H16 contributes to the ATP binding site. D18 contacts Mg(2+). A K(+)-binding site is contributed by E44. 2 residues coordinate L-methionine: E57 and Q100. Positions 100 to 110 (QSPDIAQGVNE) are flexible loop. ATP contacts are provided by residues 167–169 (DGK), 233–234 (RF), D242, 248–249 (RK), and K269. D242 lines the L-methionine pocket. Residue K273 participates in L-methionine binding.

Belongs to the AdoMet synthase family. In terms of assembly, homotetramer; dimer of dimers. The cofactor is Mg(2+). K(+) is required as a cofactor.

The protein localises to the cytoplasm. The enzyme catalyses L-methionine + ATP + H2O = S-adenosyl-L-methionine + phosphate + diphosphate. The protein operates within amino-acid biosynthesis; S-adenosyl-L-methionine biosynthesis; S-adenosyl-L-methionine from L-methionine: step 1/1. Catalyzes the formation of S-adenosylmethionine (AdoMet) from methionine and ATP. The overall synthetic reaction is composed of two sequential steps, AdoMet formation and the subsequent tripolyphosphate hydrolysis which occurs prior to release of AdoMet from the enzyme. This chain is S-adenosylmethionine synthase, found in Desulfosudis oleivorans (strain DSM 6200 / JCM 39069 / Hxd3) (Desulfococcus oleovorans).